Reading from the N-terminus, the 339-residue chain is Ribosomal RNA small subunit methyltransferase C (339 aa).

The protein belongs to the methyltransferase superfamily. RsmC family. In terms of assembly, monomer.

Its subcellular location is the cytoplasm. It carries out the reaction guanosine(1207) in 16S rRNA + S-adenosyl-L-methionine = N(2)-methylguanosine(1207) in 16S rRNA + S-adenosyl-L-homocysteine + H(+). In terms of biological role, specifically methylates the guanine in position 1207 of 16S rRNA in the 30S particle. This chain is Ribosomal RNA small subunit methyltransferase C, found in Aliivibrio salmonicida (strain LFI1238) (Vibrio salmonicida (strain LFI1238)).